The primary structure comprises 631 residues: Fatty acid ABC transporter ATP-binding/permease protein (631 aa).

Positions 1 to 11 (MTAPPGARPRA) are enriched in low complexity. The tract at residues 1–20 (MTAPPGARPRAASPPPNMRS) is disordered. Helical transmembrane passes span 42–62 (IAVITLGIAGTTIGVIVPRIL), 123–143 (LALALALYLAAALMIWAQARL), and 205–225 (ILTMVAVLAMMVSISGLLALI). The ABC transmembrane type-1 domain maps to 42 to 365 (IAVITLGIAG…LAGMYNALQS (324 aa)). Positions 397–631 (VEFEHVNFAY…RGVYYQMTRA (235 aa)) constitute an ABC transporter domain. 430–437 (GPTGAGKT) is a binding site for ATP.

This sequence belongs to the ABC transporter superfamily. Lipid exporter (TC 3.A.1.106) family.

The protein localises to the cell inner membrane. Its function is as follows. ABC transporter involved in fatty acid import. Transmembrane domains (TMD) form a pore in the membrane and the ATP-binding domain (NBD) is responsible for energy generation. The polypeptide is Fatty acid ABC transporter ATP-binding/permease protein (Mycobacterium bovis (strain ATCC BAA-935 / AF2122/97)).